Reading from the N-terminus, the 315-residue chain is Adenine deaminase (315 aa).

Zn(2+)-binding residues include His14, His16, and His194. Glu197 functions as the Proton donor in the catalytic mechanism. Residue Asp275 coordinates Zn(2+). Asp276 is a substrate binding site.

The protein belongs to the metallo-dependent hydrolases superfamily. Adenosine and AMP deaminases family. Adenine deaminase type 2 subfamily. Zn(2+) serves as cofactor.

The enzyme catalyses adenine + H2O + H(+) = hypoxanthine + NH4(+). Its function is as follows. Catalyzes the hydrolytic deamination of adenine to hypoxanthine. Plays an important role in the purine salvage pathway and in nitrogen catabolism. This is Adenine deaminase from Pseudomonas putida (strain GB-1).